Here is an 85-residue protein sequence, read N- to C-terminus: RNA-binding protein KhpA (85 aa).

The region spanning 32 to 85 (YLEYNLTVNPEDIGRVIGRQGRVASAIRTIVYSVRVSGPKRVRLTIEDGQQKNS) is the KH domain.

It belongs to the KhpA RNA-binding protein family. Forms a complex with KhpB.

It is found in the cytoplasm. Functionally, a probable RNA chaperone. Forms a complex with KhpB which binds to cellular RNA and controls its expression. Plays a role in peptidoglycan (PG) homeostasis and cell length regulation. Necessary for correct cell elongation. The protein is RNA-binding protein KhpA of Lactiplantibacillus plantarum (strain ATCC BAA-793 / NCIMB 8826 / WCFS1) (Lactobacillus plantarum).